Here is a 332-residue protein sequence, read N- to C-terminus: MQKNILVLGAGAWGTALALQLAYRGHNVRINSWKAEHNEQMLKDNNNHKYLPSIEKFPSRLKAIQDWQANIIEFDSILVATPSSGFKNTILELKECILPQQNIISATKGFCHDSYALLSEIAEDILPTTKFALLTGPSFAKELANQLPTAVVVASKDINYARYVQELFSNENFRCYTTTDIIGAQVGGAVKNVLAITAGIAAGMEFGVNAHAALITRGLAEIKKLGLKLGANSETFIGLSCLGDLLLTCSDNQSRNRRFGLYLGQGMTIQQALKEVNNVVEGYFTAKAVYNLAKKHNVEMPLVFATYRILYEAADPRDIVKELMTRQLKNEN.

The NADPH site is built by Trp-13, Lys-34, and Lys-108. Lys-108, Gly-136, and Ser-138 together coordinate sn-glycerol 3-phosphate. Ala-140 is a binding site for NADPH. The sn-glycerol 3-phosphate site is built by Lys-191, Asp-244, Ser-254, Arg-255, and Asn-256. The active-site Proton acceptor is Lys-191. Residue Arg-255 coordinates NADPH. The NADPH site is built by Val-279 and Glu-281.

It belongs to the NAD-dependent glycerol-3-phosphate dehydrogenase family.

It localises to the cytoplasm. It carries out the reaction sn-glycerol 3-phosphate + NAD(+) = dihydroxyacetone phosphate + NADH + H(+). The enzyme catalyses sn-glycerol 3-phosphate + NADP(+) = dihydroxyacetone phosphate + NADPH + H(+). It participates in membrane lipid metabolism; glycerophospholipid metabolism. Its function is as follows. Catalyzes the reduction of the glycolytic intermediate dihydroxyacetone phosphate (DHAP) to sn-glycerol 3-phosphate (G3P), the key precursor for phospholipid synthesis. In Francisella tularensis subsp. tularensis (strain FSC 198), this protein is Glycerol-3-phosphate dehydrogenase [NAD(P)+].